The chain runs to 1278 residues: Dynactin subunit 1 (1278 aa).

The disordered stretch occupies residues 1–25 (MAQSKRHVYSRTPSGSRMSAEASAR). The 43-residue stretch at 48–90 (GATLFATGKWVGVILDEAKGKNDGTVQGRKYFTCDEGHGIFVR) folds into the CAP-Gly domain. Residues 100–223 (GADTTSPETP…SKEEEGLRAQ (124 aa)) are disordered. A compositionally biased stretch (polar residues) spans 102 to 114 (DTTSPETPDSSAS). A Phosphothreonine modification is found at Thr108. The segment covering 129-152 (SKLRGLKPKKAPTARKTTTRRPKP) has biased composition (basic residues). 3 positions are modified to phosphothreonine; by SLK: Thr145, Thr146, and Thr147. Over residues 161–184 (AGASSSLGPSGSASAGELSSSEPS) the composition is skewed to low complexity. Ser179 is subject to Phosphoserine; by PLK1. A Phosphoserine; by CDK1 modification is found at Ser212. Coiled coils occupy residues 213-547 (PSKE…RQQQ), 943-1049 (LKLE…EGLR), and 1182-1211 (SAQL…KETV). Over residues 214–223 (SKEEEGLRAQ) the composition is skewed to basic and acidic residues. The tract at residues 911 to 1278 (EYDAERPPSK…LHQLHSRLIS (368 aa)) is interaction with HPS6.

The protein belongs to the dynactin 150 kDa subunit family. In terms of assembly, monomer and homodimer. Subunit of dynactin, a multiprotein complex part of a tripartite complex with dynein and a adapter, such as BICDL1, BICD2 or HOOK3. The dynactin complex is built around ACTR1A/ACTB filament and consists of an actin-related filament composed of a shoulder domain, a pointed end and a barbed end. Its length is defined by its flexible shoulder domain. The soulder is composed of 2 DCTN1 subunits, 4 DCTN2 and 2 DCTN3. DCTN1/p150(glued) binds directly to microtubules and to cytoplasmic dynein. The 4 DCNT2 (via N-terminus) bind the ACTR1A filament and act as molecular rulers to determine the length. The pointed end is important for binding dynein-dynactin cargo adapters. Consists of 4 subunits: ACTR10, DCNT4, DCTN5 and DCTN6. The barbed end is composed of a CAPZA1:CAPZB heterodimers, which binds ACTR1A/ACTB filament and dynactin and stabilizes dynactin. Interacts with the C-terminus of MAPRE1, MAPRE2 and MAPRE3. Interacts (via C-terminus) with SNX6. Interacts with CLN3, DYNAP, ECPAS and FBXL5. Interacts with MISP; this interaction regulates its distribution at the cell cortex. Interacts with CEP131. Interacts with CEP126. Interacts with CLIP1. Interacts with dynein intermediate chain and dynein heavy chain. Interacts with PLK1 (via POLO-box domain). Interacts with TBCB. Binds preferentially to tyrosinated microtubules than to detyrosinated microtubules. Interacts with PARD6A. Interacts with HPS6. Interacts with KIF3A. Interacts with BICD2. Interacts with DST (isoform 9). Interacts with DST (isoform 1). Identified in a complex with MREG and RILP. Interacts with BCCIP (isoform 2/alpha). Interacts with DCDC1. Interacts with AKNA. Interacts with DYNC1I2. Interacts with RUFY3 and RUFY4. Ubiquitinated by a SCF complex containing FBXL5, leading to its degradation by the proteasome. In terms of processing, phosphorylation by SLK at Thr-145, Thr-146 and Thr-147 targets DCTN1 to the centrosome. It is uncertain if SLK phosphorylates all three threonines or one or two of them. PLK1-mediated phosphorylation at Ser-179 is essential for its localization in the nuclear envelope, promotes its dissociation from microtubules during early mitosis and positively regulates nuclear envelope breakdown during prophase. In terms of tissue distribution, brain.

It localises to the cytoplasm. Its subcellular location is the cytoskeleton. The protein localises to the microtubule organizing center. The protein resides in the centrosome. It is found in the centriole. It localises to the spindle. Its subcellular location is the nucleus envelope. The protein localises to the cell cortex. Its function is as follows. Part of the dynactin complex that activates the molecular motor dynein for ultra-processive transport along microtubules. Plays a key role in dynein-mediated retrograde transport of vesicles and organelles along microtubules by recruiting and tethering dynein to microtubules. Binds to both dynein and microtubules providing a link between specific cargos, microtubules and dynein. Essential for targeting dynein to microtubule plus ends, recruiting dynein to membranous cargos and enhancing dynein processivity (the ability to move along a microtubule for a long distance without falling off the track). Can also act as a brake to slow the dynein motor during motility along the microtubule. Can regulate microtubule stability by promoting microtubule formation, nucleation and polymerization and by inhibiting microtubule catastrophe in neurons. Inhibits microtubule catastrophe by binding both to microtubules and to tubulin, leading to enhanced microtubule stability along the axon. Plays a role in metaphase spindle orientation. Plays a role in centriole cohesion and subdistal appendage organization and function. Its recruitment to the centriole in a KIF3A-dependent manner is essential for the maintenance of centriole cohesion and the formation of subdistal appendage. Also required for microtubule anchoring at the mother centriole. Plays a role in primary cilia formation. The protein is Dynactin subunit 1 of Homo sapiens (Human).